The chain runs to 215 residues: Adenylate kinase (215 aa).

10–15 (GTGKGT) is a binding site for ATP. The segment at 30 to 59 (STGDMLRESVVLKNKIGMIIKNIIEEGKLV) is NMP. AMP is bound by residues threonine 31, arginine 36, 57-59 (KLV), 85-88 (GFPR), and glutamine 92. Residues 122–159 (GRRIHIQSGRIYHVKFKPPKIKDKDDLTGQTLITRKDD) form an LID region. ATP contacts are provided by residues arginine 123 and 132–133 (IY). AMP is bound by residues arginine 156 and arginine 167. ATP is bound at residue leucine 200.

This sequence belongs to the adenylate kinase family. Monomer.

Its subcellular location is the cytoplasm. The catalysed reaction is AMP + ATP = 2 ADP. The protein operates within purine metabolism; AMP biosynthesis via salvage pathway; AMP from ADP: step 1/1. In terms of biological role, catalyzes the reversible transfer of the terminal phosphate group between ATP and AMP. Plays an important role in cellular energy homeostasis and in adenine nucleotide metabolism. In Buchnera aphidicola subsp. Acyrthosiphon pisum (strain 5A), this protein is Adenylate kinase.